The following is a 156-amino-acid chain: Ribosomal RNA large subunit methyltransferase H (156 aa).

S-adenosyl-L-methionine contacts are provided by residues Leu73, Gly104, and 123–128 (VSSLTL).

This sequence belongs to the RNA methyltransferase RlmH family. Homodimer.

The protein localises to the cytoplasm. It catalyses the reaction pseudouridine(1915) in 23S rRNA + S-adenosyl-L-methionine = N(3)-methylpseudouridine(1915) in 23S rRNA + S-adenosyl-L-homocysteine + H(+). In terms of biological role, specifically methylates the pseudouridine at position 1915 (m3Psi1915) in 23S rRNA. This chain is Ribosomal RNA large subunit methyltransferase H, found in Burkholderia mallei (strain NCTC 10247).